Here is a 400-residue protein sequence, read N- to C-terminus: Large envelope protein (400 aa).

An N-acetylmethionine modification is found at Met1. Disordered regions lie at residues 1 to 55 and 85 to 118; these read MGGW…WPEA and LTTV…SHPQ. A lipid anchor (N-myristoyl glycine; by host) is attached at Gly2. The segment at 2-119 is pre-S1; the sequence is GGWSSKPRQG…PPLRDSHPQA (118 aa). Residues 2–174 are pre-S; it reads GGWSSKPRQG…FSRTGDPAPN (173 aa). The Virion surface; in external conformation portion of the chain corresponds to 2 to 181; that stretch reads GGWSSKPRQG…APNMESTTSG (180 aa). At 2-253 the chain is on the intravirion; in internal conformation side; it reads GGWSSKPRQG…PGYRWMCLRR (252 aa). Trp4 carries an N-linked (GlcNAc...) asparagine glycan. The span at 96 to 106 shows a compositional bias: polar residues; sequence STNRQSGRQPT. The segment at 120–174 is pre-S2; that stretch reads MQWNSTTFHQALLDPRVKGLYFPAGGSSSGTVNPVPTTASPISSIFSRTGDPAPN. A helical membrane pass occupies residues 182–202; sequence FLGPLLVLQAGFFLLTRILTI. Residues 203 to 253 lie on the Intravirion; in external conformation side of the membrane; that stretch reads PQSLDSWWTSLNFLGGAPTCPGQNSQSPTSNHSPTSCPPICPGYRWMCLRR. Residues 254-274 form a helical membrane-spanning segment; that stretch reads FIIFLFILLLCLIFLLVLLDF. Residues 275–348 are Virion surface-facing; it reads QGMLPVCPLL…WASVRFSWLS (74 aa). N-linked (GlcNAc...) asparagine; by host glycosylation occurs at Asn320. Residues 349–369 traverse the membrane as a helical segment; the sequence is LLVPFVQWFAGLSPTVWLSVI. Residues 370-375 lie on the Intravirion side of the membrane; it reads WMMWYW. A helical transmembrane segment spans residues 376-398; sequence GPSLYNILSPFLPLLPIFFCLWV. The Virion surface portion of the chain corresponds to 399-400; the sequence is YI.

It belongs to the orthohepadnavirus major surface antigen family. In its internal form (Li-HBsAg), interacts with the capsid protein and with the isoform S. Interacts with host chaperone CANX. In terms of assembly, associates with host chaperone CANX through its pre-S2 N glycan; this association may be essential for isoform M proper secretion. As to quaternary structure, interacts with isoform L. Interacts with the antigens of satellite virus HDV (HDVAgs); this interaction is required for encapsidation of HDV genomic RNA. Isoform M is N-terminally acetylated by host at a ratio of 90%, and N-glycosylated by host at the pre-S2 region. In terms of processing, myristoylated.

It localises to the virion membrane. In terms of biological role, the large envelope protein exists in two topological conformations, one which is termed 'external' or Le-HBsAg and the other 'internal' or Li-HBsAg. In its external conformation the protein attaches the virus to cell receptors and thereby initiating infection. This interaction determines the species specificity and liver tropism. This attachment induces virion internalization predominantly through caveolin-mediated endocytosis. The large envelope protein also assures fusion between virion membrane and endosomal membrane. In its internal conformation the protein plays a role in virion morphogenesis and mediates the contact with the nucleocapsid like a matrix protein. Its function is as follows. The middle envelope protein plays an important role in the budding of the virion. It is involved in the induction of budding in a nucleocapsid independent way. In this process the majority of envelope proteins bud to form subviral lipoprotein particles of 22 nm of diameter that do not contain a nucleocapsid. The protein is Large envelope protein of Hepatitis B virus genotype C subtype ar (isolate Japan/S-207/1988) (HBV-C).